The following is a 135-amino-acid chain: Large ribosomal subunit protein uL16c (135 aa).

Positions 1–23 are enriched in basic residues; it reads MLSPKKTKFRKEHRGRMKGRSSR. The disordered stretch occupies residues 1 to 24; it reads MLSPKKTKFRKEHRGRMKGRSSRG.

This sequence belongs to the universal ribosomal protein uL16 family. In terms of assembly, part of the 50S ribosomal subunit.

It is found in the plastid. The protein resides in the chloroplast. In Pelargonium hortorum (Common geranium), this protein is Large ribosomal subunit protein uL16c.